A 274-amino-acid chain; its full sequence is uncharacterized protein (274 aa).

The segment at 235–274 (ETFDTQQDPKKTPETDKNAAYKGKEKKGKKEERGPRSIMK) is disordered. Residues 241 to 274 (QDPKKTPETDKNAAYKGKEKKGKKEERGPRSIMK) are compositionally biased toward basic and acidic residues.

This is an uncharacterized protein from Treponema pallidum (strain Nichols).